Here is a 119-residue protein sequence, read N- to C-terminus: Small ribosomal subunit protein bS6 (119 aa).

This sequence belongs to the bacterial ribosomal protein bS6 family.

Its function is as follows. Binds together with bS18 to 16S ribosomal RNA. This Thermosipho africanus (strain TCF52B) protein is Small ribosomal subunit protein bS6.